Consider the following 665-residue polypeptide: Filensin (665 aa).

A head region spans residues 1–40; that stretch reads MYRRSYVFQTRKEQYEHADEASRAAEPERPADEGWAGATS. Ser-5 bears the Phosphoserine mark. The 281-residue stretch at 40–320 folds into the IF rod domain; the sequence is SLAALQGLGE…RIIEIEGNRL (281 aa). Residues 41 to 75 are coil 1A; the sequence is LAALQGLGERVAAHVQRARALEQRHAGLRRQLDAF. Ala-42 bears the N-acetylalanine mark. The tract at residues 76–84 is linker 1; the sequence is QRLGELAGP. A coil 1B region spans residues 85–184; sequence EDALARQVES…RHKKNLLEVQ (100 aa). The linker 12 stretch occupies residues 185 to 201; it reads TYISILQQIIHTTPPAS. Positions 202–320 are coil 2; the sequence is IVTSGMREEK…RIIEIEGNRL (119 aa). A tail region spans residues 321–665; that stretch reads TSAFIETPIP…DKKKSGEKSS (345 aa). Phosphoserine occurs at positions 341 and 420. Disordered stretches follow at residues 410–439 and 506–614; these read SKFESESKEVSPLTQEGAPEDVPDGGQISK and YDGQ…KGPP. Gly-434 carries the N-myristoyl glycine lipid modification. A Phosphoserine modification is found at Ser-513. The span at 556–571 shows a compositional bias: basic and acidic residues; sequence PEEKREGEERDEESRR. Ser-665 carries the phosphoserine modification.

It belongs to the intermediate filament family. Part of a complex required for lens intermediate filament formation composed of BFSP1, BFSP2 and CRYAA. Identified in a complex that contains VIM, EZR, AHNAK, BFSP1, BFSP2, ANK2, PLEC, PRX and spectrin. Found in a complex composed of PPL (via C-terminal linker domain), BFSP1 and BFSP2 in the retinal lens. Within the complex interacts with BFSP2. Interacts (via C-terminus) with MIP (via C-terminus) in aged lens fiber cells. Proteolytically cleaved during lens cell fiber differentiation with increased fragmentation as fiber cell age increases. In terms of processing, myristoylated at Gly-434 following proteolytic cleavage at Asp-433. Post-translationally, acetylated at Ala-42 following proteolytic cleavage at Leu-41. Expressed in the cortex and nucleus of the retina lens (at protein level).

The protein localises to the cell membrane. The protein resides in the cytoplasm. Its subcellular location is the cytoskeleton. It is found in the cell cortex. Its function is as follows. Required for the correct formation of lens intermediate filaments as part of a complex composed of BFSP1, BFSP2 and CRYAA. Involved in altering the calcium regulation of MIP water permeability. The protein is Filensin (BFSP1) of Homo sapiens (Human).